Reading from the N-terminus, the 413-residue chain is Ferredoxin--NADP reductase (413 aa).

Residue Met-1 is modified to N-acetylmethionine. The 59-residue stretch at Asn-18–Leu-76 folds into the CpcD-like domain. Positions Lys-74–Lys-120 are disordered. A compositionally biased stretch (polar residues) spans Pro-107–Thr-116. The region spanning Lys-133–Leu-256 is the FAD-binding FR-type domain. FAD is bound by residues Arg-192–Ser-195, Cys-213–Arg-215, Tyr-219, Val-230–Ser-232, and Thr-271. NADP(+) contacts are provided by Ser-195 and Arg-215. Residues Thr-271, Ile-303–Pro-304, Ser-333–Arg-334, Arg-343–Gln-347, Gly-372–Leu-373, and Glu-411 each bind NADP(+).

It belongs to the ferredoxin--NADP reductase type 1 family. Purifies with both the classic phycobilisome (PBS) supercomplex (CpcG-PBS) and a photosystem I-associated PBS called CpcL-PBS; it accumulates to a higher level in CpcL-PBS. In both PBS it can be cross-linked to both phycocyanin subunits. FAD is required as a cofactor. Post-translationally, acetylated at the N-terminus; 6% of protein in CpcG-PBS and 12% of protein in CpcL-PBS is acetylated.

The protein localises to the cellular thylakoid membrane. It carries out the reaction 2 reduced [2Fe-2S]-[ferredoxin] + NADP(+) + H(+) = 2 oxidized [2Fe-2S]-[ferredoxin] + NADPH. The protein is Ferredoxin--NADP reductase of Synechocystis sp. (strain ATCC 27184 / PCC 6803 / Kazusa).